Here is a 216-residue protein sequence, read N- to C-terminus: Glutathione S-transferase D5 (216 aa).

Residues 1–80 (MDFYYSPRGS…YLVEKYGKDD (80 aa)) enclose the GST N-terminal domain. Residues 50-52 (HTI) and 64-66 (ESR) each bind glutathione. The GST C-terminal domain occupies 86–207 (DPKKQALVNQ…KGAVELKGVF (122 aa)).

The protein belongs to the GST superfamily. Delta family. Homodimer.

It carries out the reaction RX + glutathione = an S-substituted glutathione + a halide anion + H(+). Its function is as follows. Conjugation of reduced glutathione to a wide number of exogenous and endogenous hydrophobic electrophiles. May be involved in detoxification. This chain is Glutathione S-transferase D5, found in Drosophila melanogaster (Fruit fly).